Consider the following 612-residue polypeptide: Sulfite reductase [NADPH] flavoprotein alpha-component (612 aa).

One can recognise a Flavodoxin-like domain in the interval Val-64–Val-202. Residues Ser-70 to Ala-75, Ser-117 to Gly-120, and Leu-153 to Cys-162 each bind FMN. One can recognise an FAD-binding FR-type domain in the interval Thr-247–Pro-461. Residues Thr-335, Lys-369, Arg-399 to Ser-402, Thr-417 to Gly-419, Tyr-423, and Gly-432 to Ser-435 each bind FAD. Residues Ser-532 to Arg-533, Lys-538 to Gln-542, and Asp-574 contribute to the NADP(+) site. Tyr-612 serves as a coordination point for FAD.

Belongs to the NADPH-dependent sulphite reductase flavoprotein subunit CysJ family. This sequence in the N-terminal section; belongs to the flavodoxin family. It in the C-terminal section; belongs to the flavoprotein pyridine nucleotide cytochrome reductase family. Alpha(8)-beta(8). The alpha component is a flavoprotein, the beta component is a hemoprotein. The cofactor is FAD. FMN is required as a cofactor.

The enzyme catalyses hydrogen sulfide + 3 NADP(+) + 3 H2O = sulfite + 3 NADPH + 4 H(+). Its pathway is sulfur metabolism; hydrogen sulfide biosynthesis; hydrogen sulfide from sulfite (NADPH route): step 1/1. Functionally, component of the sulfite reductase complex that catalyzes the 6-electron reduction of sulfite to sulfide. This is one of several activities required for the biosynthesis of L-cysteine from sulfate. The flavoprotein component catalyzes the electron flow from NADPH -&gt; FAD -&gt; FMN to the hemoprotein component. This is Sulfite reductase [NADPH] flavoprotein alpha-component from Yersinia pestis bv. Antiqua (strain Nepal516).